A 127-amino-acid polypeptide reads, in one-letter code: Glycine cleavage system H protein (127 aa).

The 83-residue stretch at 22-104 (KARIGITHFA…YEKAWMIVVE (83 aa)) folds into the Lipoyl-binding domain. Lys-63 is subject to N6-lipoyllysine.

The protein belongs to the GcvH family. The glycine cleavage system is composed of four proteins: P, T, L and H. (R)-lipoate is required as a cofactor.

The glycine cleavage system catalyzes the degradation of glycine. The H protein shuttles the methylamine group of glycine from the P protein to the T protein. Its function is as follows. Is also involved in protein lipoylation via its role as an octanoyl/lipoyl carrier protein intermediate. This is Glycine cleavage system H protein from Bacillus subtilis (strain 168).